Reading from the N-terminus, the 219-residue chain is Elongation factor Ts (219 aa).

Residues 82–85 (TDFV) are involved in Mg(2+) ion dislocation from EF-Tu.

This sequence belongs to the EF-Ts family.

It localises to the cytoplasm. Its function is as follows. Associates with the EF-Tu.GDP complex and induces the exchange of GDP to GTP. It remains bound to the aminoacyl-tRNA.EF-Tu.GTP complex up to the GTP hydrolysis stage on the ribosome. The chain is Elongation factor Ts from Synechococcus sp. (strain CC9902).